Here is a 74-residue protein sequence, read N- to C-terminus: U2-sicaritoxin-Sdo1a (74 aa).

The N-terminal stretch at 1-20 (MKLSFCFFLCAIVLFSFAEA) is a signal peptide. The propeptide occupies 21–39 (RINPNQLKRLRELVRDDEP). Disulfide bonds link Cys-42–Cys-59, Cys-49–Cys-62, and Cys-58–Cys-71.

Expressed by the venom gland.

The protein localises to the secreted. The sequence is that of U2-sicaritoxin-Sdo1a from Hexophthalma dolichocephala (Afrotropical spider).